Consider the following 554-residue polypeptide: Serine/threonine-protein kinase ROP18 (554 aa).

The helical transmembrane segment at 17-40 threads the bilayer; the sequence is GLATLLPKTACLAGLNVALVFLLF. The region spanning 252–531 is the Protein kinase domain; sequence LVRGAPLGSG…PLQALETAAF (280 aa). Positions 262, 264, and 281 each coordinate ATP. An N-linked (GlcNAc...) asparagine glycan is attached at asparagine 306. ATP contacts are provided by methionine 357, alanine 359, and aspartate 362. Residue asparagine 377 is glycosylated (N-linked (GlcNAc...) asparagine). Aspartate 409 serves as the catalytic Proton acceptor. Aspartate 427 is a binding site for ATP. Aspartate 427 lines the Mg(2+) pocket. An N-linked (GlcNAc...) asparagine glycan is attached at asparagine 434. Cysteine 478 and cysteine 497 are disulfide-bonded.

The protein belongs to the protein kinase superfamily. Ser/Thr protein kinase family. Component of a complex at least composed of ROP18, GRA7 and ROP2. Component of a complex at least composed of ROP18 and ROP5. Interacts with GRA7 in the absence of ROP5. Interacts with mouse IRGB6 (TGTP1/TGTP2).

The protein localises to the parasitophorous vacuole membrane. The protein resides in the cytoplasmic vesicle. Its subcellular location is the secretory vesicle. It localises to the rhoptry. It catalyses the reaction L-threonyl-[protein] + ATP = O-phospho-L-threonyl-[protein] + ADP + H(+). The enzyme catalyses L-seryl-[protein] + ATP = O-phospho-L-seryl-[protein] + ADP + H(+). With respect to regulation, kinase activity is enhanced by polymorphic pseudokinase ROP5. Protein kinase. Virulence factor. Mediates parasite survival in mouse macrophages and monocytes. Reduces the accumulation of mouse IRGA6 (IIGP1) and IRGB6 (TGTP1/TGTP2), immunity-related GTPases (IRGs) that protect mice from infection by certain intracellular pathogens, on the parasitophorous vacuole and IRG-mediated killing of parasites by mouse cells; probably in connection with ROP5. In complex with GRA7, targets IRGs to prevent IRG-mediated parasite killing by mouse cells. Phosphorylates mouse IRGA6 (IIGP1); its activity toward mouse IRGA6 is promoted by GRA7 or ROP5. Phosphorylates mouse IRGB6 (TGTP1/TGTP2). Phosphorylates mouse IRGB10 (GM12250). Does not affect IFN-gamma (IFNG)-mediated parasite killing in human cells that do not possess the large variety of IRGs. The chain is Serine/threonine-protein kinase ROP18 from Toxoplasma gondii.